Here is a 635-residue protein sequence, read N- to C-terminus: Threonine--tRNA ligase (635 aa).

Positions 1 to 58 (MIRVICDNETFELPTGSTAADFASKIKNSHYFAGVVINDQIKDLSTTLSEGDVLKFVT) constitute a TGS domain. The segment at 237 to 528 (DHRVLGTKLD…LIEHFKGRFP (292 aa)) is catalytic. Zn(2+) is bound by residues Cys-328, His-379, and His-505.

Belongs to the class-II aminoacyl-tRNA synthetase family. In terms of assembly, homodimer. Requires Zn(2+) as cofactor.

It is found in the cytoplasm. It catalyses the reaction tRNA(Thr) + L-threonine + ATP = L-threonyl-tRNA(Thr) + AMP + diphosphate + H(+). Functionally, catalyzes the attachment of threonine to tRNA(Thr) in a two-step reaction: L-threonine is first activated by ATP to form Thr-AMP and then transferred to the acceptor end of tRNA(Thr). Also edits incorrectly charged L-seryl-tRNA(Thr). This is Threonine--tRNA ligase from Chlamydia felis (strain Fe/C-56) (Chlamydophila felis).